Reading from the N-terminus, the 1485-residue chain is Putative E3 ubiquitin-protein ligase LIN-2 (1485 aa).

Residues 337–353 (EENEDDSDSELDNESVD) show a composition bias toward acidic residues. Disordered stretches follow at residues 337 to 363 (EENEDDSDSELDNESVDSDDKNNIFSP), 384 to 450 (NQIP…ISNA), and 462 to 507 (RKND…KLSM). The span at 438–450 (SSPDISIDNISNA) shows a compositional bias: low complexity. A compositionally biased stretch (polar residues) spans 466–484 (SQTPSMNQDNENSLVLNDS). Positions 510-585 (KPPKDFVCPI…TSWKEQNPEL (76 aa)) constitute a U-box domain. WD repeat units lie at residues 1194 to 1232 (SCKEVVELDLSSNGEVLSLHYLNGQVLSGLMDGTSKVCD), 1246 to 1283 (EHTKAVTSLCSSGDRLYSASLDKTIRVWTIKSDGIKCI), 1409 to 1448 (SLSTGLDIHRIAINSDFIFAGTKFGTIEVWLKDKFTRVAS), and 1454 to 1485 (GHTKITSLVSDVDGMMLFVGSSDGKIQVWALD).

The enzyme catalyses S-ubiquitinyl-[E2 ubiquitin-conjugating enzyme]-L-cysteine + [acceptor protein]-L-lysine = [E2 ubiquitin-conjugating enzyme]-L-cysteine + N(6)-ubiquitinyl-[acceptor protein]-L-lysine.. It functions in the pathway protein modification; protein ubiquitination. Functionally, putative E3 ubiquitin-protein ligase involved in the rhizobial infection process. Plays an important role in the early steps of infection thread formation and in growth and differentiation of nodules. In Lotus japonicus (Lotus corniculatus var. japonicus), this protein is Putative E3 ubiquitin-protein ligase LIN-2.